We begin with the raw amino-acid sequence, 264 residues long: Hydroxyethylthiazole kinase (264 aa).

Met47 lines the substrate pocket. Arg123 and Ser169 together coordinate ATP. Residue Gly196 coordinates substrate.

Belongs to the Thz kinase family. Requires Mg(2+) as cofactor.

The enzyme catalyses 5-(2-hydroxyethyl)-4-methylthiazole + ATP = 4-methyl-5-(2-phosphooxyethyl)-thiazole + ADP + H(+). It participates in cofactor biosynthesis; thiamine diphosphate biosynthesis; 4-methyl-5-(2-phosphoethyl)-thiazole from 5-(2-hydroxyethyl)-4-methylthiazole: step 1/1. Its function is as follows. Catalyzes the phosphorylation of the hydroxyl group of 4-methyl-5-beta-hydroxyethylthiazole (THZ). In Brachyspira hyodysenteriae (strain ATCC 49526 / WA1), this protein is Hydroxyethylthiazole kinase.